The chain runs to 509 residues: Cruciferin CRU1 (509 aa).

Residues 1–23 form the signal peptide; the sequence is MVKVPHLLVATFGVLLVLNGCLA. Cysteine 37 and cysteine 70 form a disulfide bridge. Positions 42 to 271 constitute a Cupin type-1 1 domain; sequence LDVLQPTETI…ALKIDVRLAQ (230 aa). 2 positions are modified to phosphoserine: serine 53 and serine 97. Cysteine 113 and cysteine 326 are oxidised to a cystine. A Phosphothreonine modification is found at threonine 116. Disordered stretches follow at residues 119-175, 230-249, and 301-321; these read DSQP…GFRD, RLAG…QQQN, and YESE…DNGL. Low complexity predominate over residues 124-172; it reads QGQQQGQPWQGQQGQQGQQGQQGQQGQQGQQGQQGQQGQQGQQGQQQQG. The region spanning 332-481 is the Cupin type-1 2 domain; sequence ENIDDPARAD…AFQISLEEAR (150 aa). Serine 352 is modified (phosphoserine). Phosphothreonine occurs at positions 445 and 487.

It belongs to the 11S seed storage protein (globulins) family. Hexamer; each subunit is composed of an acidic and a basic chain derived from a single precursor and linked by a disulfide bond.

Its function is as follows. This is a seed storage protein. This chain is Cruciferin CRU1 (CRU1), found in Brassica napus (Rape).